A 130-amino-acid polypeptide reads, in one-letter code: Small ribosomal subunit protein uS8 (130 aa).

The protein belongs to the universal ribosomal protein uS8 family. In terms of assembly, part of the 30S ribosomal subunit. Contacts proteins S5 and S12.

One of the primary rRNA binding proteins, it binds directly to 16S rRNA central domain where it helps coordinate assembly of the platform of the 30S subunit. The sequence is that of Small ribosomal subunit protein uS8 from Mannheimia succiniciproducens (strain KCTC 0769BP / MBEL55E).